The primary structure comprises 527 residues: CTP synthase (527 aa).

An amidoligase domain region spans residues 1–270 (MKYIFVTGGV…ADVLCQLLQL (270 aa)). Ser12 contacts CTP. Residue Ser12 coordinates UTP. ATP contacts are provided by residues 13–18 (GLGKGI) and Asp70. Asp70 and Glu145 together coordinate Mg(2+). CTP-binding positions include 152-154 (DIE), 191-196 (KTKPTQ), and Lys227. Residues 191-196 (KTKPTQ) and Lys227 each bind UTP. The region spanning 292–525 (TIGIVSKYGK…VEACLKNRGK (234 aa)) is the Glutamine amidotransferase type-1 domain. Gly349 is an L-glutamine binding site. The active-site Nucleophile; for glutamine hydrolysis is the Cys376. L-glutamine-binding positions include 377–380 (LGFQ), Glu400, and Arg455. Active-site residues include His498 and Glu500.

Belongs to the CTP synthase family. Homotetramer.

It carries out the reaction UTP + L-glutamine + ATP + H2O = CTP + L-glutamate + ADP + phosphate + 2 H(+). It catalyses the reaction L-glutamine + H2O = L-glutamate + NH4(+). The catalysed reaction is UTP + NH4(+) + ATP = CTP + ADP + phosphate + 2 H(+). It participates in pyrimidine metabolism; CTP biosynthesis via de novo pathway; CTP from UDP: step 2/2. With respect to regulation, allosterically activated by GTP, when glutamine is the substrate; GTP has no effect on the reaction when ammonia is the substrate. The allosteric effector GTP functions by stabilizing the protein conformation that binds the tetrahedral intermediate(s) formed during glutamine hydrolysis. Inhibited by the product CTP, via allosteric rather than competitive inhibition. In terms of biological role, catalyzes the ATP-dependent amination of UTP to CTP with either L-glutamine or ammonia as the source of nitrogen. Regulates intracellular CTP levels through interactions with the four ribonucleotide triphosphates. The sequence is that of CTP synthase from Methanospirillum hungatei JF-1 (strain ATCC 27890 / DSM 864 / NBRC 100397 / JF-1).